We begin with the raw amino-acid sequence, 444 residues long: Spermatogenesis-associated protein 1 (444 aa).

Positions 268–403 (SLLKIEREKI…RKLDTDKMKL (136 aa)) form a coiled coil.

In terms of assembly, interacts with IFT20. As to expression, highly abundant in the testis, and is also expressed in the heart and kidney (at protein level).

It is found in the cytoplasmic vesicle. The protein resides in the secretory vesicle. The protein localises to the acrosome. The protein is Spermatogenesis-associated protein 1 (Spata1) of Mus musculus (Mouse).